The following is a 488-amino-acid chain: Protein nucleotidyltransferase YdiU (488 aa).

Positions 91, 93, 94, 114, 126, 127, 177, and 184 each coordinate ATP. Asp253 serves as the catalytic Proton acceptor. Asn254 and Asp263 together coordinate Mg(2+). Residue Asp263 coordinates ATP.

Belongs to the SELO family. Mg(2+) serves as cofactor. Mn(2+) is required as a cofactor.

It catalyses the reaction L-seryl-[protein] + ATP = 3-O-(5'-adenylyl)-L-seryl-[protein] + diphosphate. The catalysed reaction is L-threonyl-[protein] + ATP = 3-O-(5'-adenylyl)-L-threonyl-[protein] + diphosphate. It carries out the reaction L-tyrosyl-[protein] + ATP = O-(5'-adenylyl)-L-tyrosyl-[protein] + diphosphate. The enzyme catalyses L-histidyl-[protein] + UTP = N(tele)-(5'-uridylyl)-L-histidyl-[protein] + diphosphate. It catalyses the reaction L-seryl-[protein] + UTP = O-(5'-uridylyl)-L-seryl-[protein] + diphosphate. The catalysed reaction is L-tyrosyl-[protein] + UTP = O-(5'-uridylyl)-L-tyrosyl-[protein] + diphosphate. Nucleotidyltransferase involved in the post-translational modification of proteins. It can catalyze the addition of adenosine monophosphate (AMP) or uridine monophosphate (UMP) to a protein, resulting in modifications known as AMPylation and UMPylation. In Bacillus cereus (strain ZK / E33L), this protein is Protein nucleotidyltransferase YdiU.